Reading from the N-terminus, the 107-residue chain is Metallothionein-1 (107 aa).

A propeptide spanning residues 1 to 2 (MD) is cleaved from the precursor.

This sequence belongs to the metallothionein superfamily. Type 7 family.

Its function is as follows. The metallothioneins are involved in the cellular sequestration of toxic metal ions. Binds 12 cadmium ions per molecule. This Tetrahymena pyriformis protein is Metallothionein-1.